Reading from the N-terminus, the 130-residue chain is Flagellar assembly factor FliW (130 aa).

This sequence belongs to the FliW family. In terms of assembly, interacts with translational regulator CsrA and flagellin(s).

Its subcellular location is the cytoplasm. Acts as an anti-CsrA protein, binds CsrA and prevents it from repressing translation of its target genes, one of which is flagellin. Binds to flagellin and participates in the assembly of the flagellum. This Clostridioides difficile (strain 630) (Peptoclostridium difficile) protein is Flagellar assembly factor FliW.